The following is a 395-amino-acid chain: Chorismate synthase (395 aa).

Positions 40 and 46 each coordinate NADP(+). Residues 134 to 136, 256 to 257, glycine 301, 316 to 320, and arginine 342 contribute to the FMN site; these read RAS, QA, and KPIST.

The protein belongs to the chorismate synthase family. As to quaternary structure, homotetramer. FMNH2 is required as a cofactor.

It carries out the reaction 5-O-(1-carboxyvinyl)-3-phosphoshikimate = chorismate + phosphate. The protein operates within metabolic intermediate biosynthesis; chorismate biosynthesis; chorismate from D-erythrose 4-phosphate and phosphoenolpyruvate: step 7/7. Catalyzes the anti-1,4-elimination of the C-3 phosphate and the C-6 proR hydrogen from 5-enolpyruvylshikimate-3-phosphate (EPSP) to yield chorismate, which is the branch point compound that serves as the starting substrate for the three terminal pathways of aromatic amino acid biosynthesis. This reaction introduces a second double bond into the aromatic ring system. This is Chorismate synthase from Beutenbergia cavernae (strain ATCC BAA-8 / DSM 12333 / CCUG 43141 / JCM 11478 / NBRC 16432 / NCIMB 13614 / HKI 0122).